Consider the following 493-residue polypeptide: Monocarboxylate transporter 1 (493 aa).

Over 1–22 (MPPAIGGPVGYTPPDGGWGWAV) the chain is Cytoplasmic. The chain crosses the membrane as a helical span at residues 23 to 44 (LVGAFISIGFSYAFPKSITVFF). A (S)-lactate-binding site is contributed by Lys38. The Extracellular portion of the chain corresponds to 45–55 (KEIEVIFSATT). A helical membrane pass occupies residues 56 to 80 (SEVSWISSIMLAVMYAGGPISSILV). Residues 81–84 (NKYG) are Cytoplasmic-facing. Residues 85-105 (SRPVMIAGGCLSGCGLIAASF) traverse the membrane as a helical segment. Topologically, residues 106–109 (CNTV) are extracellular. A helical membrane pass occupies residues 110–132 (QELYLCIGVIGGLGLAFNLNPAL). The Cytoplasmic portion of the chain corresponds to 133-146 (TMIGKYFYKKRPLA). A helical transmembrane segment spans residues 147–169 (NGLAMAGSPVFLSTLAPLNQAFF). Residues 170–174 (DIFDW) are Extracellular-facing. A helical membrane pass occupies residues 175–194 (RGSFLILGGLLLNCCVAGSL). Residues 195–254 (MRPIGPEQVKLEKLKSKESLQEAGKSDANTDLIGGSPKGEKLSVFQTINKFLDLSLFTHR) lie on the Cytoplasmic side of the membrane. A phosphoserine mark is found at Ser210, Ser213, and Ser220. Position 224 is a phosphothreonine (Thr224). Ser230 carries the post-translational modification Phosphoserine. Residues 255–281 (GFLLYLSGNVVMFFGLFTPLVFLSSYG) form a helical membrane-spanning segment. The Extracellular segment spans residues 282-288 (KSKDFSS). The helical transmembrane segment at 289–310 (EKSAFLLSILAFVDMVARPSMG) threads the bilayer. Asp302 provides a ligand contact to H(+). Arg306 is a binding site for (S)-lactate. Residues 311–321 (LAANTKWIRPR) are Cytoplasmic-facing. A helical transmembrane segment spans residues 322 to 342 (IQYFFAASVVANGVCHLLAPL). The Extracellular segment spans residues 343–346 (STTY). A helical membrane pass occupies residues 347–368 (VGFCVYAGVFGFAFGWLSSVLF). Over 369–382 (ETLMDLIGPQRFSS) the chain is Cytoplasmic. Residues 383 to 403 (AVGLVTIVECCPVLLGPPLLG) traverse the membrane as a helical segment. At 404–414 (RLNDMYGDYKY) the chain is on the extracellular side. The helical transmembrane segment at 415–436 (TYWACGVILIIAGIYLFIGMGI) threads the bilayer. The Cytoplasmic segment spans residues 437–493 (NYRLLAKEQKAEEKQKREGKEDEASTDVDEKPKETMKAAQSPQQHSSGDPTEEESPV). The span at 447–472 (AEEKQKREGKEDEASTDVDEKPKETM) shows a compositional bias: basic and acidic residues. The disordered stretch occupies residues 447–493 (AEEKQKREGKEDEASTDVDEKPKETMKAAQSPQQHSSGDPTEEESPV). Ser461 is modified (phosphoserine). At Thr462 the chain carries Phosphothreonine. Residues 474 to 485 (AAQSPQQHSSGD) show a composition bias toward polar residues. 4 positions are modified to phosphoserine: Ser477, Ser482, Ser483, and Ser491.

It belongs to the major facilitator superfamily. Monocarboxylate porter (TC 2.A.1.13) family. In terms of assembly, interacts with isoform 2 of BSG; interaction mediates SLC16A1 targeting to the plasma membrane. Interacts with EMB; interaction mediates SLC16A1 targeting to the plasma membrane. As to expression, detected in liver, brain, spinal cord, spermatozoa, muscle, white adipose tissue and brown adipose tissue (at protein level). Widely expressed, except in pancreas, where expression is not detectable.

It is found in the cell membrane. The protein resides in the basolateral cell membrane. Its subcellular location is the apical cell membrane. The enzyme catalyses (S)-lactate(in) + H(+)(in) = (S)-lactate(out) + H(+)(out). It carries out the reaction acetate(out) + H(+)(out) = acetate(in) + H(+)(in). It catalyses the reaction acetoacetate(out) + H(+)(out) = acetoacetate(in) + H(+)(in). The catalysed reaction is pyruvate(out) + H(+)(out) = pyruvate(in) + H(+)(in). The enzyme catalyses (R)-3-hydroxybutanoate(out) + H(+)(out) = (R)-3-hydroxybutanoate(in) + H(+)(in). It carries out the reaction 3-methyl-2-oxobutanoate(out) + H(+)(out) = 3-methyl-2-oxobutanoate(in) + H(+)(in). It catalyses the reaction 4-methyl-2-oxopentanoate(out) + H(+)(out) = 4-methyl-2-oxopentanoate(in) + H(+)(in). The catalysed reaction is succinate(in) + 2 H(+)(in) = succinate(out) + 2 H(+)(out). Functionally, bidirectional proton-coupled monocarboxylate transporter. Catalyzes the rapid transport across the plasma membrane of many monocarboxylates such as lactate, pyruvate, acetate and the ketone bodies acetoacetate and beta-hydroxybutyrate, and thus contributes to the maintenance of intracellular pH. The transport direction is determined by the proton motive force and the concentration gradient of the substrate monocarboxylate. MCT1 is a major lactate exporter. Plays a role in cellular responses to a high-fat diet by modulating the cellular levels of lactate and pyruvate that contribute to the regulation of central metabolic pathways and insulin secretion, with concomitant effects on plasma insulin levels and blood glucose homeostasis. Facilitates the protonated monocarboxylate form of succinate export, that its transient protonation upon muscle cell acidification in exercising muscle and ischemic heart. Functions via alternate outward- and inward-open conformation states. Protonation and deprotonation of 302-Asp is essential for the conformational transition. This chain is Monocarboxylate transporter 1 (Slc16a1), found in Mus musculus (Mouse).